We begin with the raw amino-acid sequence, 388 residues long: Dual-specificity RNA methyltransferase RlmN (388 aa).

The active-site Proton acceptor is E109. The Radical SAM core domain occupies E115–D354. The cysteines at positions 122 and 359 are disulfide-linked. [4Fe-4S] cluster contacts are provided by C129, C133, and C136. S-adenosyl-L-methionine-binding positions include G183–E184, S215, S237–H239, and N316. C359 serves as the catalytic S-methylcysteine intermediate.

Belongs to the radical SAM superfamily. RlmN family. It depends on [4Fe-4S] cluster as a cofactor.

The protein resides in the cytoplasm. It carries out the reaction adenosine(2503) in 23S rRNA + 2 reduced [2Fe-2S]-[ferredoxin] + 2 S-adenosyl-L-methionine = 2-methyladenosine(2503) in 23S rRNA + 5'-deoxyadenosine + L-methionine + 2 oxidized [2Fe-2S]-[ferredoxin] + S-adenosyl-L-homocysteine. It catalyses the reaction adenosine(37) in tRNA + 2 reduced [2Fe-2S]-[ferredoxin] + 2 S-adenosyl-L-methionine = 2-methyladenosine(37) in tRNA + 5'-deoxyadenosine + L-methionine + 2 oxidized [2Fe-2S]-[ferredoxin] + S-adenosyl-L-homocysteine. Its function is as follows. Specifically methylates position 2 of adenine 2503 in 23S rRNA and position 2 of adenine 37 in tRNAs. m2A2503 modification seems to play a crucial role in the proofreading step occurring at the peptidyl transferase center and thus would serve to optimize ribosomal fidelity. The polypeptide is Dual-specificity RNA methyltransferase RlmN (Klebsiella pneumoniae subsp. pneumoniae (strain ATCC 700721 / MGH 78578)).